The sequence spans 669 residues: MEKIVPPAVRIEELRRILREHEYRYYVLSSPTIDDFEYDAMMKQLEELEREYPEWDSPDSPTHRVGSDKTEGFASVRHDRPMLSLSNTYNYDEIGDFYRRVSEGLQGAPFEIVAELKFDGLSISLIYEDGMLVRAVTRGDGIMGDDVTANVRTIRSVPLRLRGDDYPRMLEVRGEILLPFKEFDRINAQREAEGEPLFANPRNAASGTIKQLDPHIVAGRNLDAYFYYLYSDEPLAENHYDRLMQARQWGFKVSDAVTLCCSKEEVYAFIDRFDTERLTLPVATDGIVLKVNAPAQQDLLGFTAKSPRWAIAYKYQAERVRTRLQHVSYQVGRTGAVTPVANLDPVLISGTVVRRASLHNADFIAEKDLHEGDFVYVEKGGEIIPKIVGVDTDARSIDGRPIVFTVLCPDCATPLVREQGEAAYYCPNAEGCPQQQKGRLEHYCGRKTADINIGPETIELLYSRNMIRNVADFYALTEEQLLTLPGFKKRAAAKLLDSIEASKARPYQAILFGLGIRFVGETVAKKLAAVYPSIDALAAATSEELVQIDEIGERIAAAVLHFFSLRQNRELIERLRLAGVSLEAETVSVAVSNRLAGKTVVISGTFEKRSRDEYKAMVEDNGGRMAGSVSSKTSFILAGSDMGPSKREKAEKLGVRLMSEEEFLRLIEE.

35-39 (DFEYD) is an NAD(+) binding site. The disordered stretch occupies residues 52–71 (YPEWDSPDSPTHRVGSDKTE). Basic and acidic residues predominate over residues 61–71 (PTHRVGSDKTE). NAD(+) is bound by residues 84–85 (SL) and Glu115. Lys117 serves as the catalytic N6-AMP-lysine intermediate. 4 residues coordinate NAD(+): Arg138, Glu175, Lys290, and Lys314. Residues Cys408, Cys411, Cys426, and Cys432 each contribute to the Zn(2+) site. The BRCT domain maps to 590–669 (AVSNRLAGKT…EEEFLRLIEE (80 aa)).

This sequence belongs to the NAD-dependent DNA ligase family. LigA subfamily. The cofactor is Mg(2+). Mn(2+) is required as a cofactor.

The enzyme catalyses NAD(+) + (deoxyribonucleotide)n-3'-hydroxyl + 5'-phospho-(deoxyribonucleotide)m = (deoxyribonucleotide)n+m + AMP + beta-nicotinamide D-nucleotide.. Functionally, DNA ligase that catalyzes the formation of phosphodiester linkages between 5'-phosphoryl and 3'-hydroxyl groups in double-stranded DNA using NAD as a coenzyme and as the energy source for the reaction. It is essential for DNA replication and repair of damaged DNA. The protein is DNA ligase of Porphyromonas gingivalis (strain ATCC BAA-308 / W83).